The sequence spans 421 residues: Phosphoglycerate kinase (421 aa).

(2R)-3-phosphoglycerate contacts are provided by valine 23, aspartate 24, phenylalanine 25, asparagine 26, glutamine 41, arginine 42, serine 65, histidine 66, glycine 68, arginine 69, leucine 124, arginine 125, histidine 172, and arginine 173. An ADP-binding site is contributed by glycine 216. Glycine 216 is a CDP binding site. Residue lysine 218 coordinates AMP. Position 221 (aspartate 221) interacts with CDP. Aspartate 221 lines the Mg(2+) pocket. Position 222 (lysine 222) interacts with AMP. Lysine 222 contacts ATP. Position 240 (glycine 240) interacts with ADP. Glycine 240 is a CDP binding site. AMP contacts are provided by glycine 241 and glycine 315. ATP is bound by residues glycine 241 and glycine 315. Glycine 340 and phenylalanine 345 together coordinate CDP. ADP is bound at residue phenylalanine 345. Glutamate 346 contributes to the AMP binding site. The ATP site is built by glutamate 346, aspartate 377, and threonine 378. Aspartate 377 contributes to the Mg(2+) binding site.

The protein belongs to the phosphoglycerate kinase family. Monomer. Mg(2+) serves as cofactor.

It is found in the cytoplasm. The protein localises to the mitochondrion. It catalyses the reaction (2R)-3-phosphoglycerate + ATP = (2R)-3-phospho-glyceroyl phosphate + ADP. It functions in the pathway carbohydrate degradation; glycolysis; pyruvate from D-glyceraldehyde 3-phosphate: step 2/5. Functionally, catalyzes one of the two ATP producing reactions in the glycolytic pathway via the reversible conversion of 1,3-diphosphoglycerate to 3-phosphoglycerate. Both L- and D- forms of purine and pyrimidine nucleotides can be used as substrates, but the activity is much lower on pyrimidines. Negatively regulates the biosynthesis of acetyl-CoA from pyruvate in the mitochondrion. The chain is Phosphoglycerate kinase (pgkA) from Emericella nidulans (strain FGSC A4 / ATCC 38163 / CBS 112.46 / NRRL 194 / M139) (Aspergillus nidulans).